The primary structure comprises 302 residues: L-glutamate/L-aspartate-binding protein (302 aa).

Positions 1–23 are cleaved as a signal peptide; that stretch reads MRIAPSLLSTAIVAALLSAPVVA.

This sequence belongs to the bacterial solute-binding protein 3 family.

It localises to the periplasm. In terms of biological role, binds L-glutamate and L-aspartate. The sequence is that of L-glutamate/L-aspartate-binding protein from Pseudomonas aeruginosa (strain ATCC 15692 / DSM 22644 / CIP 104116 / JCM 14847 / LMG 12228 / 1C / PRS 101 / PAO1).